Reading from the N-terminus, the 1748-residue chain is Flagellar attachment zone protein 1 (1748 aa).

Coiled-coil stretches lie at residues 613–657, 684–864, and 903–1663; these read REQE…KLQK, VTLD…HKVR, and NDHM…SALE. 41 tandem repeats follow at residues 1012–1025, 1026–1039, 1040–1053, 1054–1067, 1068–1081, 1082–1095, 1096–1109, 1110–1123, 1124–1137, 1138–1151, 1152–1165, 1166–1179, 1180–1193, 1194–1207, 1208–1221, 1222–1235, 1236–1249, 1250–1263, 1264–1277, 1278–1291, 1292–1305, 1306–1319, 1320–1333, 1334–1347, 1348–1361, 1362–1375, 1376–1389, 1390–1403, 1404–1417, 1418–1431, 1432–1445, 1446–1459, 1460–1473, 1474–1487, 1488–1501, 1502–1515, 1516–1529, 1530–1543, 1544–1557, 1558–1571, and 1572–1585. Residues 1012–1529 form a 41 X 14 AA tandem repeats of E-E-L-E-L-K-[VA]-A-E-N-E-K-L-A region; that stretch reads EELELKAAEN…LKAAENEKLA (518 aa).

It localises to the cell projection. The protein resides in the cilium. The protein localises to the flagellum. In terms of biological role, a component of FAZ filament that is required for correct FAZ assembly and attachment. Not essential for new flagellum growth. The polypeptide is Flagellar attachment zone protein 1 (Trypanosoma brucei gambiense (strain MHOM/CI/86/DAL972)).